Consider the following 255-residue polypeptide: UDP-2,3-diacylglucosamine hydrolase (255 aa).

5 residues coordinate Mn(2+): Asp-8, His-10, Asp-41, Asn-79, and His-114. 79 to 80 (NR) is a substrate binding site. Residues Asp-122, Ser-160, Asn-164, Lys-167, and His-195 each contribute to the substrate site. His-195 and His-197 together coordinate Mn(2+).

Belongs to the LpxH family. Requires Mn(2+) as cofactor.

The protein localises to the cell inner membrane. The catalysed reaction is UDP-2-N,3-O-bis[(3R)-3-hydroxytetradecanoyl]-alpha-D-glucosamine + H2O = 2-N,3-O-bis[(3R)-3-hydroxytetradecanoyl]-alpha-D-glucosaminyl 1-phosphate + UMP + 2 H(+). Its pathway is glycolipid biosynthesis; lipid IV(A) biosynthesis; lipid IV(A) from (3R)-3-hydroxytetradecanoyl-[acyl-carrier-protein] and UDP-N-acetyl-alpha-D-glucosamine: step 4/6. In terms of biological role, hydrolyzes the pyrophosphate bond of UDP-2,3-diacylglucosamine to yield 2,3-diacylglucosamine 1-phosphate (lipid X) and UMP by catalyzing the attack of water at the alpha-P atom. Involved in the biosynthesis of lipid A, a phosphorylated glycolipid that anchors the lipopolysaccharide to the outer membrane of the cell. This is UDP-2,3-diacylglucosamine hydrolase from Hamiltonella defensa subsp. Acyrthosiphon pisum (strain 5AT).